Consider the following 297-residue polypeptide: Acetyl-coenzyme A carboxylase carboxyl transferase subunit beta (297 aa).

One can recognise a CoA carboxyltransferase N-terminal domain in the interval 27-296; it reads LWHKCPSCEA…PEAAKEVAAV (270 aa). Positions 31, 34, 50, and 53 each coordinate Zn(2+). The C4-type zinc finger occupies 31–53; it reads CPSCEAVLYRPELEKTLDVCPKC.

The protein belongs to the AccD/PCCB family. As to quaternary structure, acetyl-CoA carboxylase is a heterohexamer composed of biotin carboxyl carrier protein (AccB), biotin carboxylase (AccC) and two subunits each of ACCase subunit alpha (AccA) and ACCase subunit beta (AccD). It depends on Zn(2+) as a cofactor.

Its subcellular location is the cytoplasm. The enzyme catalyses N(6)-carboxybiotinyl-L-lysyl-[protein] + acetyl-CoA = N(6)-biotinyl-L-lysyl-[protein] + malonyl-CoA. It functions in the pathway lipid metabolism; malonyl-CoA biosynthesis; malonyl-CoA from acetyl-CoA: step 1/1. In terms of biological role, component of the acetyl coenzyme A carboxylase (ACC) complex. Biotin carboxylase (BC) catalyzes the carboxylation of biotin on its carrier protein (BCCP) and then the CO(2) group is transferred by the transcarboxylase to acetyl-CoA to form malonyl-CoA. This chain is Acetyl-coenzyme A carboxylase carboxyl transferase subunit beta, found in Pseudomonas entomophila (strain L48).